A 504-amino-acid polypeptide reads, in one-letter code: Heat shock 70 kDa protein 14 (504 aa).

Belongs to the heat shock protein 70 family. As to quaternary structure, component of ribosome-associated complex (RAC).

It localises to the cytoplasm. It is found in the cytosol. Functionally, component of the ribosome-associated complex (RAC), a complex involved in folding or maintaining nascent polypeptides in a folding-competent state. The protein is Heat shock 70 kDa protein 14 (hspa14) of Danio rerio (Zebrafish).